We begin with the raw amino-acid sequence, 188 residues long: Elongation factor P (188 aa).

The protein belongs to the elongation factor P family.

It localises to the cytoplasm. It participates in protein biosynthesis; polypeptide chain elongation. In terms of biological role, involved in peptide bond synthesis. Stimulates efficient translation and peptide-bond synthesis on native or reconstituted 70S ribosomes in vitro. Probably functions indirectly by altering the affinity of the ribosome for aminoacyl-tRNA, thus increasing their reactivity as acceptors for peptidyl transferase. The protein is Elongation factor P of Ralstonia nicotianae (strain ATCC BAA-1114 / GMI1000) (Ralstonia solanacearum).